The chain runs to 256 residues: Ubiquinone/menaquinone biosynthesis C-methyltransferase UbiE (256 aa).

A compositionally biased stretch (basic and acidic residues) spans 1–12 (MNDQRKGDHAEP). A disordered region spans residues 1–23 (MNDQRKGDHAEPTTHFGYQDVPE). Residues T79, D100, and 128 to 129 (DA) each bind S-adenosyl-L-methionine.

The protein belongs to the class I-like SAM-binding methyltransferase superfamily. MenG/UbiE family.

It carries out the reaction a 2-demethylmenaquinol + S-adenosyl-L-methionine = a menaquinol + S-adenosyl-L-homocysteine + H(+). The enzyme catalyses a 2-methoxy-6-(all-trans-polyprenyl)benzene-1,4-diol + S-adenosyl-L-methionine = a 5-methoxy-2-methyl-3-(all-trans-polyprenyl)benzene-1,4-diol + S-adenosyl-L-homocysteine + H(+). The protein operates within quinol/quinone metabolism; menaquinone biosynthesis; menaquinol from 1,4-dihydroxy-2-naphthoate: step 2/2. Its pathway is cofactor biosynthesis; ubiquinone biosynthesis. Its function is as follows. Methyltransferase required for the conversion of demethylmenaquinol (DMKH2) to menaquinol (MKH2) and the conversion of 2-polyprenyl-6-methoxy-1,4-benzoquinol (DDMQH2) to 2-polyprenyl-3-methyl-6-methoxy-1,4-benzoquinol (DMQH2). This chain is Ubiquinone/menaquinone biosynthesis C-methyltransferase UbiE, found in Pseudomonas putida (strain GB-1).